A 389-amino-acid chain; its full sequence is cAMP-dependent protein kinase regulatory subunit (389 aa).

2 disordered regions span residues 1–57 (MSEN…KFAG) and 87–110 (SVSA…PPYH). The segment at 1–128 (MSENTFPGRL…RLKKSISGNF (128 aa)) is dimerization and phosphorylation. The segment covering 21-31 (AANTEKPSTSH) has biased composition (polar residues). The segment covering 34–43 (RVTERDEDKV) has biased composition (basic and acidic residues). S87 bears the Phosphoserine mark. The segment covering 87–105 (SVSAESLNPNPTASSNESW) has biased composition (polar residues). 3',5'-cyclic AMP-binding positions include 129-258 (LFNH…FLEE), E207, R216, 261-377 (LLST…GVEE), E327, and R336.

This sequence belongs to the cAMP-dependent kinase regulatory chain family. Tetramer, composed of 2 regulatory (R) and 2 catalytic (C) subunits. In the presence of cAMP it dissociates into 2 active monomeric C subunits and an R dimer.

This chain is cAMP-dependent protein kinase regulatory subunit (pkar), found in Blumeria graminis (Powdery mildew).